The chain runs to 160 residues: Eukaryotic translation initiation factor 5A-4 (160 aa).

Residues 1-12 (MSDEEHHFESKA) are compositionally biased toward basic and acidic residues. The tract at residues 1 to 21 (MSDEEHHFESKADAGASKTYP) is disordered. K52 carries the post-translational modification Hypusine.

This sequence belongs to the eIF-5A family. Lys-52 undergoes hypusination, a unique post-translational modification that consists in the addition of a butylamino group from spermidine to lysine side chain, leading to the formation of the unusual amino acid hypusine. eIF-5As are the only known proteins to undergo this modification, which is essential for their function.

Functionally, translation factor that promotes translation elongation and termination, particularly upon ribosome stalling at specific amino acid sequence contexts. Binds between the exit (E) and peptidyl (P) site of the ribosome and promotes rescue of stalled ribosome: specifically required for efficient translation of polyproline-containing peptides as well as other motifs that stall the ribosome. Acts as a ribosome quality control (RQC) cofactor by joining the RQC complex to facilitate peptidyl transfer during CAT tailing step. The polypeptide is Eukaryotic translation initiation factor 5A-4 (Solanum lycopersicum (Tomato)).